Here is a 131-residue protein sequence, read N- to C-terminus: Lymphocyte antigen 6E (131 aa).

Residues 1–20 form the signal peptide; sequence MKIFLPVLLAALLGVERASS. Positions 21–101 constitute a UPAR/Ly6 domain; the sequence is LMCFSCLNQK…CCQSFLCNFS (81 aa). Disulfide bonds link C23–C48, C26–C35, C41–C71, C75–C92, and C93–C98. A glycan (N-linked (GlcNAc...) asparagine) is linked at N99. A lipid anchor (GPI-anchor amidated serine) is attached at S101. A propeptide spans 102-131 (removed in mature form); that stretch reads AADGGLRASVTLLGAGLLLSLLPALLRFGP.

Interacts with CHRNA4. As to expression, widely expressed, predominantly in liver, kidney, ovary, spleen and peripheral blood Leukocytes.

The protein localises to the cell membrane. Its function is as follows. GPI-anchored cell surface protein that regulates T-lymphocytes proliferation, differentiation, and activation. Regulates the T-cell receptor (TCR) signaling by interacting with component CD3Z/CD247 at the plasma membrane, leading to CD3Z/CD247 phosphorylation modulation. Restricts the entry of human coronaviruses, including SARS-CoV, MERS-CoV and SARS-CoV-2, by interfering with spike protein-mediated membrane fusion. Also plays an essential role in placenta formation by acting as the main receptor for syncytin-A (SynA). Therefore, participates in the normal fusion of syncytiotrophoblast layer I (SynT-I) and in the proper morphogenesis of both fetal and maternal vasculatures within the placenta. May also act as a modulator of nicotinic acetylcholine receptors (nAChRs) activity. In terms of biological role, (Microbial infection) Promotes entry, likely through an enhanced virus-cell fusion process, of various viruses including HIV-1, West Nile virus, dengue virus and Zika virus. In contrast, the paramyxovirus PIV5, which enters at the plasma membrane, does not require LY6E. Mechanistically, adopts a microtubule-like organization upon viral infection and enhances viral uncoating after endosomal escape. This Homo sapiens (Human) protein is Lymphocyte antigen 6E.